Consider the following 92-residue polypeptide: Large ribosomal subunit protein uL23 (92 aa).

The protein belongs to the universal ribosomal protein uL23 family. As to quaternary structure, part of the 50S ribosomal subunit. Contacts protein L29, and trigger factor when it is bound to the ribosome.

Functionally, one of the early assembly proteins it binds 23S rRNA. One of the proteins that surrounds the polypeptide exit tunnel on the outside of the ribosome. Forms the main docking site for trigger factor binding to the ribosome. The chain is Large ribosomal subunit protein uL23 from Bdellovibrio bacteriovorus (strain ATCC 15356 / DSM 50701 / NCIMB 9529 / HD100).